A 330-amino-acid polypeptide reads, in one-letter code: Methionyl-tRNA formyltransferase (330 aa).

112–115 (SLLP) provides a ligand contact to (6S)-5,6,7,8-tetrahydrofolate.

It belongs to the Fmt family.

The enzyme catalyses L-methionyl-tRNA(fMet) + (6R)-10-formyltetrahydrofolate = N-formyl-L-methionyl-tRNA(fMet) + (6S)-5,6,7,8-tetrahydrofolate + H(+). Its function is as follows. Attaches a formyl group to the free amino group of methionyl-tRNA(fMet). The formyl group appears to play a dual role in the initiator identity of N-formylmethionyl-tRNA by promoting its recognition by IF2 and preventing the misappropriation of this tRNA by the elongation apparatus. The protein is Methionyl-tRNA formyltransferase of Alcanivorax borkumensis (strain ATCC 700651 / DSM 11573 / NCIMB 13689 / SK2).